A 422-amino-acid chain; its full sequence is Telomerase-associated protein of 50 kDa (422 aa).

Component of the telomerase holoenzyme complex, composed of the catalytic core (the catalytic subunit TERT, the telomerase RNA template component TER and TAP65/p65), which is associated with two heterotrimeric subcomplexes: (i) the replication protein A (RPA)-related subcomplex, composed of TEB1, RPA2/TEB2 and RPA3/TEB3 and (ii) the CST-like subcomplex, composed of TAP75/p75, TAP45/p45 and TAP19/p19. TEB1 and the CST-like subcomplex are tethered to the catalytic core by TAP50/p50.

It localises to the chromosome. The protein resides in the telomere. Tethering component of the holoenzyme telomerase ribonucleoprotein (RNP) complex. Telomerase is an essential ribonucleoprotein enzyme that copies new telomeric repeats onto chromosome ends by repetitively synthesizing the short telomere-repeat sequence 5'-TTGGGG-3' using an RNA template component TER. In the telomerase holoenzyme complex, acts as a hub that anchors the two heterotrimeric subcomplexes with the catalytic core. This Tetrahymena thermophila (strain SB210) protein is Telomerase-associated protein of 50 kDa.